A 478-amino-acid polypeptide reads, in one-letter code: Ninja-family protein 7 (478 aa).

3 disordered regions span residues Met-1–Gly-247, Ser-336–Ala-374, and Asp-454–Asn-478. The segment covering Lys-23–Pro-35 has biased composition (basic and acidic residues). The span at Ile-169 to Gly-179 shows a compositional bias: polar residues. The span at Glu-180–Ala-189 shows a compositional bias: acidic residues. Residues Ser-233–Gly-242 show a composition bias toward low complexity. The span at Ala-339–Glu-359 shows a compositional bias: basic and acidic residues.

It belongs to the Ninja family.

Its subcellular location is the nucleus. The polypeptide is Ninja-family protein 7 (Zea mays (Maize)).